Here is a 343-residue protein sequence, read N- to C-terminus: Glycogen biosynthesis protein GlgD (343 aa).

This sequence belongs to the bacterial/plant glucose-1-phosphate adenylyltransferase family.

In terms of biological role, required for the synthesis of glycogen. The sequence is that of Glycogen biosynthesis protein GlgD (glgD) from Geobacillus stearothermophilus (Bacillus stearothermophilus).